Reading from the N-terminus, the 941-residue chain is Coiled-coil and C2 domain-containing protein 1A (941 aa).

Threonine 91 bears the Phosphothreonine mark. Disordered stretches follow at residues 183 to 248 and 301 to 336; these read TINE…PCSP and SRLPPPPDQLSPEPPLPAAQPVTPASTLTRPEVPQP. Residues 228–239 show a composition bias toward polar residues; sequence APSTTAQTSAKP. Phosphoserine is present on serine 247. Residues 303–318 are compositionally biased toward pro residues; the sequence is LPPPPDQLSPEPPLPA. Positions 338 to 384 form a coiled coil; sequence KNLLEALEQRMERYHVAAAQAKAKGDQRKARMHERIVKQYQDAIRAH. The interval 428–482 is disordered; it reads ANHEEGSDEEEEETPKKNTPAASTAQPKASPSRAPPSGPAPAGKAASKGTSTRAQ. Serine 434 carries the phosphoserine modification. The segment covering 467 to 476 has biased composition (low complexity); that stretch reads APAGKAASKG. Residues 475–508 are a coiled coil; it reads KGTSTRAQQQLAFLEGRKKQLLQAALRAKQKNDV. The 135-residue stretch at 628-762 folds into the C2 domain; sequence RFEQRTFSVI…ETACEVHEIL (135 aa).

Belongs to the CC2D1 family. As to expression, strongly expressed in several brain areas including frontal cortex, cortex, mesencephalon, hippocampus, midbrain and hypothalamus. Also expressed in testis and at low levels in pituitary, liver and kidney. In brain the highest levels are detected in hippocampal pyramidal cells and raphe nuclei.

It localises to the cytoplasm. The protein resides in the nucleus. It is found in the cytoskeleton. The protein localises to the microtubule organizing center. Its subcellular location is the centrosome. Functionally, transcription factor that binds specifically to the DRE (dual repressor element) and represses 5-HT1A gene transcription though this element. Mediates HDAC-independent repression of HTR1A promoter. CAMK2G inhibits CC2D1a-induced repression of the HTR1A. May play a role in the altered regulation of 5-HT1A receptors associated with anxiety and major depression. Performs essential function in controlling functional maturation of synapses. In Rattus norvegicus (Rat), this protein is Coiled-coil and C2 domain-containing protein 1A (Cc2d1a).